A 203-amino-acid polypeptide reads, in one-letter code: Ribonuclease HII (203 aa).

The region spanning 15–201 (LLVAGLDEAG…VAQAPLRFPE (187 aa)) is the RNase H type-2 domain. The a divalent metal cation site is built by Asp21, Glu22, and Asp111.

This sequence belongs to the RNase HII family. Mn(2+) serves as cofactor. It depends on Mg(2+) as a cofactor.

Its subcellular location is the cytoplasm. It catalyses the reaction Endonucleolytic cleavage to 5'-phosphomonoester.. Its function is as follows. Endonuclease that specifically degrades the RNA of RNA-DNA hybrids. The polypeptide is Ribonuclease HII (Thermus thermophilus (strain ATCC BAA-163 / DSM 7039 / HB27)).